A 164-amino-acid chain; its full sequence is Large ribosomal subunit protein bL9 (164 aa).

It belongs to the bacterial ribosomal protein bL9 family.

Binds to the 23S rRNA. The polypeptide is Large ribosomal subunit protein bL9 (Borrelia duttonii (strain Ly)).